The primary structure comprises 537 residues: Probable protein kinase UbiB (537 aa).

The chain crosses the membrane as a helical span at residues 24 to 44; it reads LLFEQPLLPWWLASLRLLMPW. Positions 126–494 constitute a Protein kinase domain; sequence RFDVEPLASA…RRRQGDNWAL (369 aa). ATP is bound by residues 132–140 and Lys-154; that span reads LASASVAQV. Residue Asp-289 is the Proton acceptor of the active site. 2 helical membrane passes run 493–513 and 515–535; these read ALRL…AGAV and LSAP…YLIV.

Belongs to the ABC1 family. UbiB subfamily.

The protein resides in the cell inner membrane. It functions in the pathway cofactor biosynthesis; ubiquinone biosynthesis [regulation]. Functionally, is probably a protein kinase regulator of UbiI activity which is involved in aerobic coenzyme Q (ubiquinone) biosynthesis. The protein is Probable protein kinase UbiB of Pseudomonas entomophila (strain L48).